The following is a 1185-amino-acid chain: Syntaxin-binding protein 5-like (1185 aa).

Met-1 is modified (N-acetylmethionine). Residues 15–44 form a disordered region; that stretch reads ASSPGSGSSSGSNSGGAGSGSVHPGGTAGL. The span at 16–26 shows a compositional bias: low complexity; that stretch reads SSPGSGSSSGS. 10 WD repeats span residues 73–106, 113–152, 157–193, 212–246, 252–284, 306–348, 356–390, 412–489, 517–628, and 642–704; these read TALA…CYCQ, VLQL…SLKF, ITYC…GYVI, HLSD…ELRV, IHSI…PSRP, PILK…KAIT, IVEF…VVDL, TCTA…YKLK, QMIY…DLVI, and TSLS…IADN. A Phosphothreonine modification is found at Thr-567. The tract at residues 567 to 601 is disordered; it reads TPEPETSPPFPDLSSQLPPSRSLSGSTNTVSSEGV. Ser-573, Ser-588, and Ser-592 each carry phosphoserine. The segment covering 578 to 592 has biased composition (low complexity); sequence DLSSQLPPSRSLSGS. Position 595 is a phosphothreonine (Thr-595). The residue at position 598 (Ser-598) is a Phosphoserine. An Omega-N-methylarginine modification is found at Arg-708. The segment covering 747-768 has biased composition (polar residues); sequence TSDHVNGHCTSPTSQSCSSGKR. Residues 747–770 form a disordered region; it reads TSDHVNGHCTSPTSQSCSSGKRLS. Ser-762, Ser-764, Ser-765, Ser-770, Ser-771, Ser-792, Ser-799, Ser-811, Ser-819, Ser-821, and Ser-822 each carry phosphoserine. WD repeat units lie at residues 831-888, 897-968, 973-1017, and 1031-1054; these read ITAL…SGTF, TFSC…QTCL, ITET…LDVN, and CFTN…TYSQ. Thr-1092 carries the phosphothreonine modification. The v-SNARE coiled-coil homology domain occupies 1120–1180; it reads SIEGMKGAAG…HELMLKYKDK (61 aa).

This sequence belongs to the WD repeat L(2)GL family. In terms of assembly, interacts with STX1A and STX4. Phosphorylated, leading to STXBP5L increased turnover and subsequent de-repression of insulin secretion. Phosphorylated on serine residues in response to glucose or phorbol esters. In terms of processing, ubiquitinated by the E3 ligase SYVN1, leading to STXBP5L proteasomal degradation. Detected in hippocampus and cerebellum. Expressed in pancreatic beta-cells where it modulates insulin secretion.

Its subcellular location is the cytoplasm. It is found in the cell membrane. The protein localises to the membrane. Functionally, plays a role in vesicle trafficking and exocytosis inhibition. In pancreatic beta-cells, inhibits insulin secretion probably by interacting with and regulating STX1A and STX4, key t-SNARE proteins involved in the fusion of insulin granules to the plasma membrane. Also plays a role in neurotransmitter release by inhibiting basal acetylcholine release from axon terminals and by preventing synaptic fatigue upon repetitive stimulation. Promotes as well axonal outgrowth. This Mus musculus (Mouse) protein is Syntaxin-binding protein 5-like (Stxbp5l).